The sequence spans 246 residues: UPF0309 protein OB3413 (246 aa).

One can recognise an SIS domain in the interval 33–212; the sequence is MATAVMNGNS…VLKMIEIFEE (180 aa).

The protein belongs to the UPF0309 family.

The chain is UPF0309 protein OB3413 from Oceanobacillus iheyensis (strain DSM 14371 / CIP 107618 / JCM 11309 / KCTC 3954 / HTE831).